The primary structure comprises 364 residues: MTHQFPSLSPEQKKELSDIAQRIVAPGKGILAADESTGTMGKRFQNINVENIEENRRCFRDILFSTDASIANCVGGIIFFHETLYQKSSNGKLFPQVVKEKGIVVGIKVDKGTAPLMGTDKETTTQGLDGLSERCAQYKKDGCDFAKWRCVLKISDGCPFALAIAENANVLARYASICQMNGLVPIVEPEILPDGDHDLQRCQYATEKVLAAVYKALSDHHVYLEGTLLKPNMVTPGHSCPKKFTPQEVAMATVTALRRTVPASVPGICFLSGGQSEEEASIHLNAINQVPLHRPWKLTFSYGRALQASALAAWQGKDANKAATQQVFVTRAKINGLASKGEYKPSGSADQASQQSLYTASYVY.

Residues arginine 56 and lysine 147 each contribute to the substrate site. The active-site Proton acceptor is the glutamate 188. The active-site Schiff-base intermediate with dihydroxyacetone-P is the lysine 230.

The protein belongs to the class I fructose-bisphosphate aldolase family. Homotetramer.

The protein localises to the cytoplasm. It is found in the cytoskeleton. Its subcellular location is the microtubule organizing center. It localises to the centrosome. The protein resides in the centriolar satellite. The catalysed reaction is beta-D-fructose 1,6-bisphosphate = D-glyceraldehyde 3-phosphate + dihydroxyacetone phosphate. The protein operates within carbohydrate degradation; glycolysis; D-glyceraldehyde 3-phosphate and glycerone phosphate from D-glucose: step 4/4. The polypeptide is Fructose-bisphosphate aldolase B (aldob) (Sparus aurata (Gilthead sea bream)).